Consider the following 126-residue polypeptide: Ribosome-binding factor A (126 aa).

The protein belongs to the RbfA family. Monomer. Binds 30S ribosomal subunits, but not 50S ribosomal subunits or 70S ribosomes.

It is found in the cytoplasm. One of several proteins that assist in the late maturation steps of the functional core of the 30S ribosomal subunit. Associates with free 30S ribosomal subunits (but not with 30S subunits that are part of 70S ribosomes or polysomes). Required for efficient processing of 16S rRNA. May interact with the 5'-terminal helix region of 16S rRNA. The sequence is that of Ribosome-binding factor A from Nitrosospira multiformis (strain ATCC 25196 / NCIMB 11849 / C 71).